Consider the following 44-residue polypeptide: Photosystem I reaction center subunit IX (44 aa).

Residues 7–27 (YLSTAPVLAILCVSFLAALLI) traverse the membrane as a helical segment.

Belongs to the PsaJ family.

The protein resides in the plastid. The protein localises to the chloroplast thylakoid membrane. Functionally, may help in the organization of the PsaE and PsaF subunits. The chain is Photosystem I reaction center subunit IX from Pinus thunbergii (Japanese black pine).